The chain runs to 1025 residues: Interferon-induced helicase C domain-containing protein 1 (1025 aa).

2 CARD domains span residues 7 to 97 (AEDS…YVKP) and 110 to 190 (AHDE…QTGN). Glycyl lysine isopeptide (Lys-Gly) (interchain with G-Cter in ISG15) cross-links involve residues Lys23 and Lys43. Residues 273–297 (SLGHNSNMGRDSGTMGSDSDESVIQ) are disordered. The span at 275–297 (GHNSNMGRDSGTMGSDSDESVIQ) shows a compositional bias: polar residues. Ser289, Ser291, and Ser302 each carry phosphoserine. In terms of domain architecture, Helicase ATP-binding spans 317–510 (AQPALDGKNI…SEAEKHILNI (194 aa)). A phosphoserine mark is found at Ser645 and Ser648. Positions 700-872 (KLIKLRNTIL…NMKPEEYAHK (173 aa)) constitute a Helicase C-terminal domain. The residue at position 828 (Ser828) is a Phosphoserine; by RIOK3. Positions 893–1020 (AKQYNDNPSL…PDLDYSEYCL (128 aa)) constitute an RLR CTR domain. Cys907, Cys910, Cys962, and Cys964 together coordinate Zn(2+).

Belongs to the helicase family. RLR subfamily. As to quaternary structure, monomer in the absence of ligands and homodimerizes in the presence of dsRNA ligands. Can assemble into helical or linear polymeric filaments on long dsRNA. Interacts with MAVS/IPS1. Interacts (via the CARD domains) with TKFC, the interaction is inhibited by viral infection. Interacts with PCBP2. Interacts with NLRC5. Interacts with PIAS2-beta. Interacts with DDX60. Interacts with ANKRD17. Interacts with IKBKE. Interacts with ATG5 and ATG12, either as ATG5 and ATG12 monomers or as ATG12-ATG5 conjugates. Interacts with ZCCHC3; leading to activate IFIH1/MDA5. Interacts with RNF123. Interacts with DDX3X. Interacts with NOD1; this interaction promotes transcription of antiviral genes and inhibition of viral replication. Interacts with ECSIT; this interaction bridges IFIH1 to the MAVS complex at the mitochondrion. In terms of processing, during apoptosis, processed into 3 cleavage products. The helicase-containing fragment, once liberated from the CARD domains, translocate from the cytoplasm to the nucleus. The processed protein significantly sensitizes cells to DNA degradation. Sumoylated. Sumoylation positively regulates its role in type I interferon induction and is enhanced by PIAS2-beta. Post-translationally, ubiquitinated by RNF125, leading to its degradation by the proteasome. USP17/UPS17L2-dependent deubiquitination positively regulates the receptor. Ubiquitinated by TRIM25 via 'Lys-63'-linked ubiquitination, promoting activation of IFIH1/MDA5. Ubiquitinated by TRIM40 via 'Lys-48'-linked ubiquitination; leading to proteasomal degradation. Ubiquitinated by TRIM65 via 'Lys-63'-linked ubiquitination, promoting activation of IFIH1/MDA5. In terms of processing, ISGylated by ISG15. ISGylation increases upon infection with viruses. ISGylation at Lys-23 and Lys-43 is dependent of dephosphorylation, regulates mitochondrial translocation and oligomerization. Essential for IFIH1/MDA5-mediated cytokine responses and restriction of virus replication. Phosphorylated. Dephosphorylated by phsophatases PP1; dephosphorylation precedes and is required for ISGylation. As to expression, expression is prominent in lung, liver, kidney, heart and spleen (at protein level). Widely expressed at low level.

The protein resides in the cytoplasm. Its subcellular location is the nucleus. It is found in the mitochondrion. It catalyses the reaction ATP + H2O = ADP + phosphate + H(+). Innate immune receptor which acts as a cytoplasmic sensor of viral nucleic acids and plays a major role in sensing viral infection and in the activation of a cascade of antiviral responses including the induction of type I interferons and pro-inflammatory cytokines. Its ligands include mRNA lacking 2'-O-methylation at their 5' cap and long-dsRNA (&gt;1 kb in length). Upon ligand binding it associates with mitochondria antiviral signaling protein (MAVS/IPS1) which activates the IKK-related kinases: TBK1 and IKBKE which phosphorylate interferon regulatory factors: IRF3 and IRF7 which in turn activate transcription of antiviral immunological genes, including interferons (IFNs); IFN-alpha and IFN-beta. Responsible for detecting the Picornaviridae family members such as encephalomyocarditis virus (EMCV), mengo encephalomyocarditis virus (ENMG), and theiler's murine encephalomyelitis virus (TMEV). Can also detect other viruses such as dengue virus (DENV), west Nile virus (WNV), and reovirus. Also involved in antiviral signaling in response to viruses containing a dsDNA genome, such as vaccinia virus. Plays an important role in amplifying innate immune signaling through recognition of RNA metabolites that are produced during virus infection by ribonuclease L (RNase L). May play an important role in enhancing natural killer cell function and may be involved in growth inhibition and apoptosis in several tumor cell lines. The protein is Interferon-induced helicase C domain-containing protein 1 of Mus musculus (Mouse).